Consider the following 94-residue polypeptide: Pyrimidine/purine nucleoside phosphorylase (94 aa).

Belongs to the nucleoside phosphorylase PpnP family.

The catalysed reaction is a purine D-ribonucleoside + phosphate = a purine nucleobase + alpha-D-ribose 1-phosphate. The enzyme catalyses adenosine + phosphate = alpha-D-ribose 1-phosphate + adenine. It catalyses the reaction cytidine + phosphate = cytosine + alpha-D-ribose 1-phosphate. It carries out the reaction guanosine + phosphate = alpha-D-ribose 1-phosphate + guanine. The catalysed reaction is inosine + phosphate = alpha-D-ribose 1-phosphate + hypoxanthine. The enzyme catalyses thymidine + phosphate = 2-deoxy-alpha-D-ribose 1-phosphate + thymine. It catalyses the reaction uridine + phosphate = alpha-D-ribose 1-phosphate + uracil. It carries out the reaction xanthosine + phosphate = alpha-D-ribose 1-phosphate + xanthine. Its function is as follows. Catalyzes the phosphorolysis of diverse nucleosides, yielding D-ribose 1-phosphate and the respective free bases. Can use uridine, adenosine, guanosine, cytidine, thymidine, inosine and xanthosine as substrates. Also catalyzes the reverse reactions. The chain is Pyrimidine/purine nucleoside phosphorylase from Psychromonas ingrahamii (strain DSM 17664 / CCUG 51855 / 37).